A 281-amino-acid chain; its full sequence is Acetyl-coenzyme A carboxylase carboxyl transferase subunit beta (281 aa).

The region spanning 23–281 is the CoA carboxyltransferase N-terminal domain; sequence IWTKCGSCQA…SLLVKLHYKN (259 aa). Zn(2+) contacts are provided by Cys-27, Cys-30, Cys-46, and Cys-49. The segment at 27-49 adopts a C4-type zinc-finger fold; sequence CGSCQAVLYKSELEKLQEVCPKC.

Belongs to the AccD/PCCB family. In terms of assembly, acetyl-CoA carboxylase is a heterohexamer composed of biotin carboxyl carrier protein (AccB), biotin carboxylase (AccC) and two subunits each of ACCase subunit alpha (AccA) and ACCase subunit beta (AccD). Zn(2+) serves as cofactor.

Its subcellular location is the cytoplasm. It catalyses the reaction N(6)-carboxybiotinyl-L-lysyl-[protein] + acetyl-CoA = N(6)-biotinyl-L-lysyl-[protein] + malonyl-CoA. It participates in lipid metabolism; malonyl-CoA biosynthesis; malonyl-CoA from acetyl-CoA: step 1/1. Functionally, component of the acetyl coenzyme A carboxylase (ACC) complex. Biotin carboxylase (BC) catalyzes the carboxylation of biotin on its carrier protein (BCCP) and then the CO(2) group is transferred by the transcarboxylase to acetyl-CoA to form malonyl-CoA. This Alteromonas mediterranea (strain DSM 17117 / CIP 110805 / LMG 28347 / Deep ecotype) protein is Acetyl-coenzyme A carboxylase carboxyl transferase subunit beta.